The chain runs to 827 residues: uncharacterized protein (827 aa).

This is an uncharacterized protein from Methanocaldococcus jannaschii (strain ATCC 43067 / DSM 2661 / JAL-1 / JCM 10045 / NBRC 100440) (Methanococcus jannaschii).